The following is a 106-amino-acid chain: Urease subunit beta (106 aa).

The protein belongs to the urease beta subunit family. As to quaternary structure, heterotrimer of UreA (gamma), UreB (beta) and UreC (alpha) subunits. Three heterotrimers associate to form the active enzyme.

The protein localises to the cytoplasm. It carries out the reaction urea + 2 H2O + H(+) = hydrogencarbonate + 2 NH4(+). It functions in the pathway nitrogen metabolism; urea degradation; CO(2) and NH(3) from urea (urease route): step 1/1. In Prochlorococcus marinus (strain MIT 9312), this protein is Urease subunit beta.